The chain runs to 120 residues: NAD(P)H-quinone oxidoreductase subunit 3 (120 aa).

Transmembrane regions (helical) follow at residues 7-27, 64-84, and 89-109; these read YEYV…ALTA, MFAL…PWAV, and LGLL…VALV.

This sequence belongs to the complex I subunit 3 family. In terms of assembly, NDH-1 can be composed of about 15 different subunits; different subcomplexes with different compositions have been identified which probably have different functions.

Its subcellular location is the cellular thylakoid membrane. The enzyme catalyses a plastoquinone + NADH + (n+1) H(+)(in) = a plastoquinol + NAD(+) + n H(+)(out). It carries out the reaction a plastoquinone + NADPH + (n+1) H(+)(in) = a plastoquinol + NADP(+) + n H(+)(out). Functionally, NDH-1 shuttles electrons from an unknown electron donor, via FMN and iron-sulfur (Fe-S) centers, to quinones in the respiratory and/or the photosynthetic chain. The immediate electron acceptor for the enzyme in this species is believed to be plastoquinone. Couples the redox reaction to proton translocation, and thus conserves the redox energy in a proton gradient. Cyanobacterial NDH-1 also plays a role in inorganic carbon-concentration. This chain is NAD(P)H-quinone oxidoreductase subunit 3, found in Crocosphaera subtropica (strain ATCC 51142 / BH68) (Cyanothece sp. (strain ATCC 51142)).